The sequence spans 258 residues: Probable F-box protein At2g29610 (258 aa).

The disordered stretch occupies residues 1 to 25; that stretch reads MVELSEIPGDPNGADPNNNPQEEDE. The segment covering 8 to 20 has biased composition (low complexity); it reads PGDPNGADPNNNP. In terms of domain architecture, F-box spans 28 to 74; sequence LPILLQLPEELIERIIAHFPQCYSPSPILVCETFRQVINSDHFYYVT.

In Arabidopsis thaliana (Mouse-ear cress), this protein is Probable F-box protein At2g29610.